Here is a 104-residue protein sequence, read N- to C-terminus: Large ribosomal subunit protein bL21 (104 aa).

This sequence belongs to the bacterial ribosomal protein bL21 family. Part of the 50S ribosomal subunit. Contacts protein L20.

In terms of biological role, this protein binds to 23S rRNA in the presence of protein L20. This chain is Large ribosomal subunit protein bL21, found in Symbiobacterium thermophilum (strain DSM 24528 / JCM 14929 / IAM 14863 / T).